A 251-amino-acid polypeptide reads, in one-letter code: Hydroxyacylglutathione hydrolase (251 aa).

Zn(2+) contacts are provided by His59, His61, Asp63, His64, His118, Asp141, and His179.

Belongs to the metallo-beta-lactamase superfamily. Glyoxalase II family. As to quaternary structure, monomer. Zn(2+) serves as cofactor.

The catalysed reaction is an S-(2-hydroxyacyl)glutathione + H2O = a 2-hydroxy carboxylate + glutathione + H(+). Its pathway is secondary metabolite metabolism; methylglyoxal degradation; (R)-lactate from methylglyoxal: step 2/2. Its function is as follows. Thiolesterase that catalyzes the hydrolysis of S-D-lactoyl-glutathione to form glutathione and D-lactic acid. This is Hydroxyacylglutathione hydrolase from Prochlorococcus marinus (strain NATL1A).